The chain runs to 846 residues: Envelope glycoprotein gp160 (846 aa).

The signal sequence occupies residues 1-31 (MRAREKERNCQNLWKWGIMLLGMLMTCSAAE). Residues 32–674 (DLWVTVYYGV…ITKWLWYIKL (643 aa)) lie on the Extracellular side of the membrane. A disulfide bridge links cysteine 53 with cysteine 73. Asparagine 87, asparagine 129, asparagine 151, asparagine 179, asparagine 182, asparagine 229, asparagine 236, asparagine 257, asparagine 271, asparagine 284, and asparagine 290 each carry an N-linked (GlcNAc...) asparagine; by host glycan. Intrachain disulfides connect cysteine 118–cysteine 200, cysteine 125–cysteine 191, cysteine 130–cysteine 152, cysteine 213–cysteine 242, and cysteine 223–cysteine 234. Residues 130 to 151 (CTDELRNSKGNGKVEEEEKRKN) form a V1 region. The V2 stretch occupies residues 152 to 191 (CSFNVRDKREQVYALFYKLDIVPIDNNNRTNSTNYRLINC). The segment at 291–327 (CTRPYKYTRQRTSIGLRQSLYTITGKKKKTGYIGQAH) is V3. The cysteines at positions 291 and 328 are disulfide-linked. The N-linked (GlcNAc...) asparagine; by host glycan is linked to asparagine 351. Positions 360 to 370 (SSGGDPEITSH) are CD4-binding loop. 2 cysteine pairs are disulfide-bonded: cysteine 374/cysteine 435 and cysteine 381/cysteine 408. The segment at 381–408 (CNTSRLFNSTWNQTNSTGFNNGTVTLPC) is V4. N-linked (GlcNAc...) asparagine; by host glycans are attached at residues asparagine 382, asparagine 388, asparagine 392, asparagine 395, asparagine 401, asparagine 438, asparagine 451, and asparagine 452. V5 regions lie at residues 450–461 (ANNSSHETIRPG) and 453–461 (SSHETIRPG). Positions 502 to 522 (AIGLGAVFLGFLGAAGSTMGA) are fusion peptide. The immunosuppression stretch occupies residues 564 to 582 (KQLQARVLAVERYLRDQQL). A disulfide bond links cysteine 588 and cysteine 594. Asparagine 601, asparagine 606, asparagine 615, and asparagine 627 each carry an N-linked (GlcNAc...) asparagine; by host glycan. The stretch at 623-657 (REIDNYTGLIYSLIEESQIQQEKNEKELLELDKWA) forms a coiled coil. The MPER; binding to GalCer stretch occupies residues 652 to 673 (ELDKWASLWNWFSITKWLWYIK). The helical transmembrane segment at 675–695 (FIMIVGGLIGLRIVFAVLSVV) threads the bilayer. Residues 696–846 (NRVRQGYSPL…IRQGLERLLL (151 aa)) lie on the Cytoplasmic side of the membrane. The YXXL motif; contains endocytosis signal signature appears at 702 to 705 (YSPL). 2 S-palmitoyl cysteine; by host lipidation sites follow: cysteine 754 and cysteine 827. Residues 845 to 846 (LL) carry the Di-leucine internalization motif motif.

Belongs to the HIV-1 env protein family. The mature envelope protein (Env) consists of a homotrimer of non-covalently associated gp120-gp41 heterodimers. The resulting complex protrudes from the virus surface as a spike. There seems to be as few as 10 spikes on the average virion. Interacts with host CD4, CCR5 and CXCR4. Gp120 also interacts with the C-type lectins CD209/DC-SIGN and CLEC4M/DC-SIGNR (collectively referred to as DC-SIGN(R)). Gp120 and gp41 interact with GalCer. Gp120 interacts with host ITGA4/ITGB7 complex; on CD4+ T-cells, this interaction results in rapid activation of integrin ITGAL/LFA-1, which facilitates efficient cell-to-cell spreading of HIV-1. Gp120 interacts with cell-associated heparan sulfate; this interaction increases virus infectivity on permissive cells and may be involved in infection of CD4- cells. In terms of assembly, the mature envelope protein (Env) consists of a homotrimer of non-covalently associated gp120-gp41 heterodimers. The resulting complex protrudes from the virus surface as a spike. There seems to be as few as 10 spikes on the average virion. In terms of processing, highly glycosylated by host. The high number of glycan on the protein is reffered to as 'glycan shield' because it contributes to hide protein sequence from adaptive immune system. Post-translationally, palmitoylation of the transmembrane protein and of Env polyprotein (prior to its proteolytic cleavage) is essential for their association with host cell membrane lipid rafts. Palmitoylation is therefore required for envelope trafficking to classical lipid rafts, but not for viral replication. Specific enzymatic cleavages in vivo yield mature proteins. Envelope glycoproteins are synthesized as an inactive precursor that is heavily N-glycosylated and processed likely by host cell furin in the Golgi to yield the mature SU and TM proteins. The cleavage site between SU and TM requires the minimal sequence [KR]-X-[KR]-R. About 2 of the 9 disulfide bonds of gp41 are reduced by P4HB/PDI, following binding to CD4 receptor.

It localises to the virion membrane. The protein localises to the host cell membrane. It is found in the host endosome membrane. Its function is as follows. Oligomerizes in the host endoplasmic reticulum into predominantly trimers. In a second time, gp160 transits in the host Golgi, where glycosylation is completed. The precursor is then proteolytically cleaved in the trans-Golgi and thereby activated by cellular furin or furin-like proteases to produce gp120 and gp41. In terms of biological role, attaches the virus to the host lymphoid cell by binding to the primary receptor CD4. This interaction induces a structural rearrangement creating a high affinity binding site for a chemokine coreceptor like CXCR4 and/or CCR5. Acts as a ligand for CD209/DC-SIGN and CLEC4M/DC-SIGNR, which are respectively found on dendritic cells (DCs), and on endothelial cells of liver sinusoids and lymph node sinuses. These interactions allow capture of viral particles at mucosal surfaces by these cells and subsequent transmission to permissive cells. HIV subverts the migration properties of dendritic cells to gain access to CD4+ T-cells in lymph nodes. Virus transmission to permissive T-cells occurs either in trans (without DCs infection, through viral capture and transmission), or in cis (following DCs productive infection, through the usual CD4-gp120 interaction), thereby inducing a robust infection. In trans infection, bound virions remain infectious over days and it is proposed that they are not degraded, but protected in non-lysosomal acidic organelles within the DCs close to the cell membrane thus contributing to the viral infectious potential during DCs' migration from the periphery to the lymphoid tissues. On arrival at lymphoid tissues, intact virions recycle back to DCs' cell surface allowing virus transmission to CD4+ T-cells. Acts as a class I viral fusion protein. Under the current model, the protein has at least 3 conformational states: pre-fusion native state, pre-hairpin intermediate state, and post-fusion hairpin state. During fusion of viral and target intracellular membranes, the coiled coil regions (heptad repeats) assume a trimer-of-hairpins structure, positioning the fusion peptide in close proximity to the C-terminal region of the ectodomain. The formation of this structure appears to drive apposition and subsequent fusion of viral and target cell membranes. Complete fusion occurs in host cell endosomes and is dynamin-dependent, however some lipid transfer might occur at the plasma membrane. The virus undergoes clathrin-dependent internalization long before endosomal fusion, thus minimizing the surface exposure of conserved viral epitopes during fusion and reducing the efficacy of inhibitors targeting these epitopes. Membranes fusion leads to delivery of the nucleocapsid into the cytoplasm. This Human immunodeficiency virus type 1 group M subtype D (isolate NDK) (HIV-1) protein is Envelope glycoprotein gp160.